The following is a 189-amino-acid chain: Peptidyl-tRNA hydrolase (189 aa).

Tyr15 contacts tRNA. Residue His20 is the Proton acceptor of the active site. Residues Phe66, Asn68, and Asn114 each contribute to the tRNA site.

It belongs to the PTH family. Monomer.

Its subcellular location is the cytoplasm. The enzyme catalyses an N-acyl-L-alpha-aminoacyl-tRNA + H2O = an N-acyl-L-amino acid + a tRNA + H(+). Functionally, hydrolyzes ribosome-free peptidyl-tRNAs (with 1 or more amino acids incorporated), which drop off the ribosome during protein synthesis, or as a result of ribosome stalling. Its function is as follows. Catalyzes the release of premature peptidyl moieties from peptidyl-tRNA molecules trapped in stalled 50S ribosomal subunits, and thus maintains levels of free tRNAs and 50S ribosomes. The chain is Peptidyl-tRNA hydrolase from Dichelobacter nodosus (strain VCS1703A).